We begin with the raw amino-acid sequence, 127 residues long: RxLR effector protein CRE6 (127 aa).

The N-terminal stretch at 1–19 (MIRNALLVLVFVLIGTISA) is a signal peptide. The RxLR-dEER signature appears at 48 to 67 (RLLRQGSVKEGGVHDATEER).

Belongs to the RxLR effector family.

The protein localises to the secreted. The protein resides in the host cell. In terms of biological role, effector that is involved in host plant infection. Contributes to virulence during the early infection stage, by inhibiting plant defense responses induced by both PAMP-triggered immunity (PTI) and effector-triggered immunity (ETI). This is RxLR effector protein CRE6 from Phytophthora infestans (strain T30-4) (Potato late blight agent).